The sequence spans 320 residues: Aminoacyl tRNA synthase complex-interacting multifunctional protein 2 (320 aa).

Residues 31 to 51 form a disordered region; that stretch reads HSKTTSPATDAGHVQEPSEPS. S36 carries the post-translational modification Phosphoserine. The tract at residues 82–162 is interaction with PRKN; it reads TPDADLDVTN…HTHSSVKNVP (81 aa). The tract at residues 162–225 is interaction with TP53; that stretch reads PENLLKCFGE…FLFSLFGQKH (64 aa). The GST C-terminal domain maps to 220-317; that stretch reads LFGQKHNAVH…NLAPFSTALQ (98 aa).

Part of the multisynthetase complex (MSC), a multisubunit complex that groups tRNA ligases for Arg (RARS1), Asp (DARS1), Gln (QARS1), Ile (IARS1), Leu (LARS1), Lys (KARS1), Met (MARS1) the bifunctional ligase for Glu and Pro (EPRS1) and the auxiliary subunits AIMP1/p43, AIMP2/p38 and EEF1E1/p18. Interacts (via N-terminus) with KARS1. Interacts with EPRS1. Forms a linear complex that contains MARS1, EEF1E1, EPRS1 and AIMP2 that is at the core of the multisubunit complex. Binds FUBP1 (via C-terminus). Interacts in both its unphosphorylated and phosphorylated forms with p53/TP53 (via N-terminus) in the nucleus following UV irradiation. Interacts (via N-terminus) with PRKN/parkin (via first RING-type domain). Interacts with TARS3. Phosphorylated on serine residues in response to UV irradiation. Post-translationally, ubiquitinated by PRKN, leading to its degradation by the proteasome.

It localises to the cytoplasm. Its subcellular location is the cytosol. The protein resides in the nucleus. Required for assembly and stability of the aminoacyl-tRNA synthase complex. Mediates ubiquitination and degradation of FUBP1, a transcriptional activator of MYC, leading to MYC down-regulation which is required for aveolar type II cell differentiation. Blocks MDM2-mediated ubiquitination and degradation of p53/TP53. Functions as a proapoptotic factor. In Rattus norvegicus (Rat), this protein is Aminoacyl tRNA synthase complex-interacting multifunctional protein 2 (Aimp2).